The primary structure comprises 381 residues: CCN family member 1 (381 aa).

The N-terminal stretch at 1–24 is a signal peptide; it reads MSSRIARALALVVTLLHLTRLALS. The 70-residue stretch at 25-94 folds into the IGFBP N-terminal domain; that stretch reads TCPAACHCPL…TALKGICRAQ (70 aa). 6 disulfides stabilise this stretch: cysteine 26–cysteine 50, cysteine 30–cysteine 52, cysteine 32–cysteine 53, cysteine 39–cysteine 56, cysteine 64–cysteine 78, and cysteine 70–cysteine 91. The 67-residue stretch at 98-164 folds into the VWFC domain; it reads RPCEYNSRIY…GQCCEEWVCD (67 aa). Serine 188 carries the post-translational modification Phosphoserine; by FAM20C. In terms of domain architecture, TSP type-1 spans 228–273; sequence KCIVQTTSWSQCSKTCGTGISTRVTNDNPECRLVKETRICEVRPCG. Positions 279–315 are heparin-binding; the sequence is SLKKGKKCSKTKKSPEPVRFTYAGCLSVKKYRPKYCG. 5 cysteine pairs are disulfide-bonded: cysteine 286-cysteine 323, cysteine 303-cysteine 337, cysteine 314-cysteine 353, cysteine 317-cysteine 355, and cysteine 322-cysteine 359. The CTCK domain maps to 286 to 360; sequence CSKTKKSPEP…QSCKCNYNCP (75 aa).

Belongs to the CCN family. In terms of assembly, interaction with integrins is heparin- and cell-type-dependent and promotes cell adhesion. In skin fibroblasts it binds ITGA6/ITGB1, in endothelial cells, binds ITGAV/ITGB3 and in platelets, ITGA2B/ITGB3. Binds, in vitro, ITGAV/ITGB5.

The protein localises to the secreted. Functionally, promotes cell proliferation, chemotaxis, angiogenesis and cell adhesion. Appears to play a role in wound healing by up-regulating, in skin fibroblasts, the expression of a number of genes involved in angiogenesis, inflammation and matrix remodeling including VEGA-A, VEGA-C, MMP1, MMP3, TIMP1, uPA, PAI-1 and integrins alpha-3 and alpha-5. CCN1-mediated gene regulation is dependent on heparin-binding. Down-regulates the expression of alpha-1 and alpha-2 subunits of collagen type-1. Promotes cell adhesion and adhesive signaling through integrin alpha-6/beta-1, cell migration through integrin alpha-v/beta-5 and cell proliferation through integrin alpha-v/beta-3. This is CCN family member 1 from Homo sapiens (Human).